The sequence spans 146 residues: CysO-cysteine peptidase (146 aa).

The region spanning 11–134 is the MPN domain; that stretch reads LVIRADLVNA…LRSYRIVDGA (124 aa). His88, His90, and Asp101 together coordinate Zn(2+). The JAMM motif motif lies at 88 to 101; that stretch reads HSHTATEAYPSRTD.

It belongs to the peptidase M67A family. Zn(2+) serves as cofactor.

It catalyses the reaction [CysO sulfur-carrier protein]-Gly-NH-CH2-C(O)-S-L-Cys + H2O = [CysO sulfur-carrier protein]-C-terminal Gly-Gly + L-cysteine + H(+). The protein operates within amino-acid biosynthesis; L-cysteine biosynthesis. Functionally, protease that hydrolyzes the covalent CysO-cysteine adduct synthesized by CysM to release L-cysteine and regenerate CysO. This is CysO-cysteine peptidase (mec) from Mycobacterium bovis (strain ATCC BAA-935 / AF2122/97).